Consider the following 337-residue polypeptide: Ribonucleoside-diphosphate reductase small subunit (337 aa).

Residues 1–22 form a disordered region; sequence MDPAVSPASTDPLDTHASGAGA. 3 residues coordinate Fe cation: Asp-91, Glu-121, and His-124. Residue Tyr-128 is part of the active site. The chain crosses the membrane as a helical span at residues 177 to 197; that stretch reads FILMILIEGVFFAASFAAIAY. Fe cation contacts are provided by Glu-184, Glu-218, and His-221.

The protein belongs to the ribonucleoside diphosphate reductase small chain family. In terms of assembly, heterotetramer composed of a homodimer of the large subunit (R1) and a homodimer of the small subunit (R2). Larger multisubunit protein complex are also active, composed of (R1)n(R2)n. Fe cation is required as a cofactor.

Its subcellular location is the host membrane. It carries out the reaction a 2'-deoxyribonucleoside 5'-diphosphate + [thioredoxin]-disulfide + H2O = a ribonucleoside 5'-diphosphate + [thioredoxin]-dithiol. Functionally, ribonucleoside-diphosphate reductase holoenzyme provides the precursors necessary for viral DNA synthesis. Allows virus growth in non-dividing cells, as well as reactivation from latency in infected hosts. Catalyzes the biosynthesis of deoxyribonucleotides from the corresponding ribonucleotides. In Human herpesvirus 2 (strain 333) (HHV-2), this protein is Ribonucleoside-diphosphate reductase small subunit.